A 153-amino-acid chain; its full sequence is Ribosome maturation factor RimP (153 aa).

It belongs to the RimP family.

It is found in the cytoplasm. Functionally, required for maturation of 30S ribosomal subunits. This chain is Ribosome maturation factor RimP, found in Coxiella burnetii (strain CbuG_Q212) (Coxiella burnetii (strain Q212)).